A 442-amino-acid chain; its full sequence is tRNA-2-methylthio-N(6)-dimethylallyladenosine synthase (442 aa).

Residues 2-120 (KKVFIRTFGC…LPKMIVDKET (119 aa)) enclose the MTTase N-terminal domain. C11, C49, C83, C157, C161, and C164 together coordinate [4Fe-4S] cluster. In terms of domain architecture, Radical SAM core spans 143 to 375 (RVEGGAAFVS…NEVIEAETAR (233 aa)). The region spanning 378–441 (QTMVGTVQRC…TFSLRGKVVE (64 aa)) is the TRAM domain.

This sequence belongs to the methylthiotransferase family. MiaB subfamily. Monomer. It depends on [4Fe-4S] cluster as a cofactor.

The protein localises to the cytoplasm. It carries out the reaction N(6)-dimethylallyladenosine(37) in tRNA + (sulfur carrier)-SH + AH2 + 2 S-adenosyl-L-methionine = 2-methylsulfanyl-N(6)-dimethylallyladenosine(37) in tRNA + (sulfur carrier)-H + 5'-deoxyadenosine + L-methionine + A + S-adenosyl-L-homocysteine + 2 H(+). Functionally, catalyzes the methylthiolation of N6-(dimethylallyl)adenosine (i(6)A), leading to the formation of 2-methylthio-N6-(dimethylallyl)adenosine (ms(2)i(6)A) at position 37 in tRNAs that read codons beginning with uridine. This chain is tRNA-2-methylthio-N(6)-dimethylallyladenosine synthase, found in Neisseria meningitidis serogroup B (strain ATCC BAA-335 / MC58).